Here is a 245-residue protein sequence, read N- to C-terminus: 1-(5-phosphoribosyl)-5-[(5-phosphoribosylamino)methylideneamino] imidazole-4-carboxamide isomerase (245 aa).

Asp7 (proton acceptor) is an active-site residue. Residue Asp129 is the Proton donor of the active site.

The protein belongs to the HisA/HisF family.

The protein localises to the cytoplasm. The enzyme catalyses 1-(5-phospho-beta-D-ribosyl)-5-[(5-phospho-beta-D-ribosylamino)methylideneamino]imidazole-4-carboxamide = 5-[(5-phospho-1-deoxy-D-ribulos-1-ylimino)methylamino]-1-(5-phospho-beta-D-ribosyl)imidazole-4-carboxamide. The protein operates within amino-acid biosynthesis; L-histidine biosynthesis; L-histidine from 5-phospho-alpha-D-ribose 1-diphosphate: step 4/9. The sequence is that of 1-(5-phosphoribosyl)-5-[(5-phosphoribosylamino)methylideneamino] imidazole-4-carboxamide isomerase from Serratia proteamaculans (strain 568).